Reading from the N-terminus, the 229-residue chain is Transmembrane 4 L6 family member 20 (229 aa).

The Lumenal portion of the chain corresponds to 1-14; that stretch reads MTCCEGWTSCNGFS. A helical membrane pass occupies residues 15–35; the sequence is LLVLLLLGVVLNAIPLIVSLV. Residues 36 to 44 are Cytoplasmic-facing; the sequence is EEDQFSQNP. The chain crosses the membrane as a helical span at residues 45-65; the sequence is ISCFEWWFPGIIGAGLMAIPA. At 66 to 83 the chain is on the lumenal side; sequence TTMSLTARKRACCNNRTG. The chain crosses the membrane as a helical span at residues 84–104; the sequence is MFLSSLFSVITVIGALYCMLI. Over 105–185 the chain is Cytoplasmic; that stretch reads SIQALLKGPL…HFDSEENKHR (81 aa). The chain crosses the membrane as a helical span at residues 186–206; it reads LIHFSVFLGLLLVGILEVLFG. Topologically, residues 207-229 are lumenal; sequence LSQIVIGFLGCLCGVSKRRSQIV.

The protein belongs to the L6 tetraspanin family. Glycosylated at Asn-132, Asn-148 and Asn-163 in presence of ceramide which inverts the orientation of TM4SF20 in membranes exposing these residues to the endoplasmic reticulum lumen. Post-translationally, cleaved by signal peptidase at Ser-14 but the peptide does not act as a signal peptide. Cleavage is inhibited by ceramide which inverts the orientation of TM4SF20 in membranes exposing the N-terminus to the cytosol and not to the endoplasmic reticulum lumen. In terms of tissue distribution, expressed in the brain, with high levels in the parietal lobe, hippocampus, pons, white matter and cerebellum.

The protein resides in the membrane. It localises to the endoplasmic reticulum membrane. In terms of biological role, polytopic transmembrane protein that inhibits regulated intramembrane proteolysis (RIP) of CREB3L1, inhibiting its activation and the induction of collagen synthesis. In response to ceramide, which alters TM4SF20 membrane topology, stimulates RIP activation of CREB3L1. Ceramide reverses the direction through which transmembrane helices are translocated into the endoplasmic reticulum membrane during translation of TM4SF20, this mechanism is called 'regulated alternative translocation' (RAT) and regulates the function of the transmembrane protein. This chain is Transmembrane 4 L6 family member 20 (TM4SF20), found in Homo sapiens (Human).